The chain runs to 306 residues: UDP-3-O-acyl-N-acetylglucosamine deacetylase (306 aa).

Zn(2+) contacts are provided by histidine 79, histidine 239, and aspartate 243. Residue histidine 266 is the Proton donor of the active site.

This sequence belongs to the LpxC family. It depends on Zn(2+) as a cofactor.

It catalyses the reaction a UDP-3-O-[(3R)-3-hydroxyacyl]-N-acetyl-alpha-D-glucosamine + H2O = a UDP-3-O-[(3R)-3-hydroxyacyl]-alpha-D-glucosamine + acetate. Its pathway is glycolipid biosynthesis; lipid IV(A) biosynthesis; lipid IV(A) from (3R)-3-hydroxytetradecanoyl-[acyl-carrier-protein] and UDP-N-acetyl-alpha-D-glucosamine: step 2/6. Catalyzes the hydrolysis of UDP-3-O-myristoyl-N-acetylglucosamine to form UDP-3-O-myristoylglucosamine and acetate, the committed step in lipid A biosynthesis. The polypeptide is UDP-3-O-acyl-N-acetylglucosamine deacetylase (Glaesserella parasuis serovar 5 (strain SH0165) (Haemophilus parasuis)).